Reading from the N-terminus, the 724-residue chain is Golgin subfamily A member 6-like protein 6 (724 aa).

Disordered regions lie at residues 1–108, 314–342, 374–454, 517–548, and 561–724; these read MLMW…HQEA, QEEK…MRRQ, MHEQ…EMWR, QEEM…KMWR, and WRQE…MQEH. The segment covering 15–29 has biased composition (basic residues); the sequence is LPTHPHLPTHPHLPT. Basic and acidic residues predominate over residues 39–60; sequence MSKETRQSKLAEAKEQLTDHHP. 2 stretches are compositionally biased toward polar residues: residues 61-71 and 79-91; these read QTNPSVGTAAS and NNGT…TSGG. The span at 94–108 shows a compositional bias: basic and acidic residues; it reads SPEDEQKASHQHQEA. Residues 164-686 adopt a coiled-coil conformation; that stretch reads ELEQALSAVA…EKMWEQEEKM (523 aa).

Belongs to the GOLGA6 family.

This Homo sapiens (Human) protein is Golgin subfamily A member 6-like protein 6 (GOLGA6L6).